Reading from the N-terminus, the 633-residue chain is NADH-quinone oxidoreductase subunit L (633 aa).

14 consecutive transmembrane segments (helical) span residues 8–28, 34–54, 95–115, 123–143, 188–208, 209–229, 251–271, 284–304, 322–342, 382–402, 412–432, 468–488, 505–525, and 613–633; these read HYTW…LFGG, WGHL…AMLL, FVLL…GYMA, FFGY…ADNY, LAVG…AGVF, AGVP…MLLG, TPVS…YLIV, QLAV…IGCA, YMVL…MHLL, FATF…AGFF, LGAG…GAGV, MILL…GGTL, ALPT…GIAV, and ALSM…VQLW.

Belongs to the complex I subunit 5 family.

The protein localises to the cell membrane. It carries out the reaction a quinone + NADH + 5 H(+)(in) = a quinol + NAD(+) + 4 H(+)(out). NDH-1 shuttles electrons from NADH, via FMN and iron-sulfur (Fe-S) centers, to quinones in the respiratory chain. The immediate electron acceptor for the enzyme in this species is believed to be menaquinone. Couples the redox reaction to proton translocation (for every two electrons transferred, four hydrogen ions are translocated across the cytoplasmic membrane), and thus conserves the redox energy in a proton gradient. In Mycobacterium tuberculosis (strain CDC 1551 / Oshkosh), this protein is NADH-quinone oxidoreductase subunit L (nuoL).